A 151-amino-acid polypeptide reads, in one-letter code: SsrA-binding protein (151 aa).

Belongs to the SmpB family.

It is found in the cytoplasm. Its function is as follows. Required for rescue of stalled ribosomes mediated by trans-translation. Binds to transfer-messenger RNA (tmRNA), required for stable association of tmRNA with ribosomes. tmRNA and SmpB together mimic tRNA shape, replacing the anticodon stem-loop with SmpB. tmRNA is encoded by the ssrA gene; the 2 termini fold to resemble tRNA(Ala) and it encodes a 'tag peptide', a short internal open reading frame. During trans-translation Ala-aminoacylated tmRNA acts like a tRNA, entering the A-site of stalled ribosomes, displacing the stalled mRNA. The ribosome then switches to translate the ORF on the tmRNA; the nascent peptide is terminated with the 'tag peptide' encoded by the tmRNA and targeted for degradation. The ribosome is freed to recommence translation, which seems to be the essential function of trans-translation. The chain is SsrA-binding protein from Chlamydia trachomatis serovar A (strain ATCC VR-571B / DSM 19440 / HAR-13).